The following is a 144-amino-acid chain: Large ribosomal subunit protein uL16 (144 aa).

Belongs to the universal ribosomal protein uL16 family. Part of the 50S ribosomal subunit.

Functionally, binds 23S rRNA and is also seen to make contacts with the A and possibly P site tRNAs. This chain is Large ribosomal subunit protein uL16, found in Porphyromonas gingivalis (strain ATCC 33277 / DSM 20709 / CIP 103683 / JCM 12257 / NCTC 11834 / 2561).